Consider the following 321-residue polypeptide: Ribose-phosphate pyrophosphokinase (321 aa).

Residues 44 to 46 (DGE) and 103 to 104 (RQ) contribute to the ATP site. The Mg(2+) site is built by His137 and Asp179. Lys202 is a catalytic residue. D-ribose 5-phosphate is bound by residues Arg204, Asp228, and 232-236 (DTAGT).

The protein belongs to the ribose-phosphate pyrophosphokinase family. Class I subfamily. As to quaternary structure, homohexamer. Mg(2+) serves as cofactor.

The protein resides in the cytoplasm. It catalyses the reaction D-ribose 5-phosphate + ATP = 5-phospho-alpha-D-ribose 1-diphosphate + AMP + H(+). The protein operates within metabolic intermediate biosynthesis; 5-phospho-alpha-D-ribose 1-diphosphate biosynthesis; 5-phospho-alpha-D-ribose 1-diphosphate from D-ribose 5-phosphate (route I): step 1/1. Involved in the biosynthesis of the central metabolite phospho-alpha-D-ribosyl-1-pyrophosphate (PRPP) via the transfer of pyrophosphoryl group from ATP to 1-hydroxyl of ribose-5-phosphate (Rib-5-P). In Staphylococcus saprophyticus subsp. saprophyticus (strain ATCC 15305 / DSM 20229 / NCIMB 8711 / NCTC 7292 / S-41), this protein is Ribose-phosphate pyrophosphokinase.